A 100-amino-acid chain; its full sequence is Putative pterin-4-alpha-carbinolamine dehydratase (100 aa).

Belongs to the pterin-4-alpha-carbinolamine dehydratase family.

The enzyme catalyses (4aS,6R)-4a-hydroxy-L-erythro-5,6,7,8-tetrahydrobiopterin = (6R)-L-erythro-6,7-dihydrobiopterin + H2O. In Allorhizobium ampelinum (strain ATCC BAA-846 / DSM 112012 / S4) (Agrobacterium vitis (strain S4)), this protein is Putative pterin-4-alpha-carbinolamine dehydratase.